The chain runs to 837 residues: CoA-transferase/lyase DddD (837 aa).

Residue Asp-602 is the Nucleophile of the active site.

Belongs to the CoA-transferase III family.

Its function is as follows. Dimethyl sulfide (DMS)-producing enzyme. Acts both as a transferase and a lyase: uses acetyl-coenzyme A (acetyl-coA) and dimethylsulfoniopropionate (DMSP) as substrates to produce DMS, acetate and 3-hydroxypropionate-CoA (3HP-CoA). Mediates the CoA-transferase prior to lyase activity. DMS is the principal form by which sulfur is transported from oceans to the atmosphere and is a key component of the ocean sulfur cycle. This chain is CoA-transferase/lyase DddD, found in Marinomonas sp. (strain MWYL1).